The primary structure comprises 333 residues: Serine/threonine-protein phosphatase 4 catalytic subunit 1 (333 aa).

The tract at residues Met-1–Thr-28 is disordered. The segment covering Asp-7–Leu-27 has biased composition (polar residues). Residues Asp-79, His-81, Asp-107, and Asn-139 each contribute to the Mn(2+) site. The active-site Proton donor is the His-140. Mn(2+) is bound by residues His-189 and His-264. Position 333 is a leucine methyl ester (Leu-333).

Belongs to the PPP phosphatase family. PP-4 (PP-X) subfamily. Serine/threonine-protein phosphatase 4 (PP4) occurs in different assemblies of the catalytic and one or more regulatory subunits. The regulatory subunits are likely to be ppfr-1, ppfr-2, ppfr-4 and smk-1. Interacts with mei-1. Mn(2+) is required as a cofactor. Methylation at the C-terminal Leu-333 is critical for interactions with regulatory subunits.

The protein resides in the cytoplasm. It is found in the cytoskeleton. It localises to the microtubule organizing center. The protein localises to the centrosome. The enzyme catalyses O-phospho-L-seryl-[protein] + H2O = L-seryl-[protein] + phosphate. It catalyses the reaction O-phospho-L-threonyl-[protein] + H2O = L-threonyl-[protein] + phosphate. Protein phosphatase which plays an essential role in meiosis and in early embryonic mitosis. During spermatocyte meiosis and the first embryonic mitosis, regulates centrosome maturation, and thus spindle formation, by recruiting some of the components of the pericentriolar material (PCM). During oocyte meiosis I, regulates meiotic chromosome dynamics including synapsis-independent chromosome pairing, restriction of synapsis to homologous chromosomes, programmed DNA double-strand break initiation and crossover formation resulting in chiasma formation. During oocyte meiosis II and probably together with regulatory subunit ppfr-1, may regulate microtubule severing by dephosphorylating and activating mei-1, a component of the katanin microtubule severing complex. This chain is Serine/threonine-protein phosphatase 4 catalytic subunit 1, found in Caenorhabditis elegans.